The primary structure comprises 326 residues: Vitamin B12 import system permease protein BtuC (326 aa).

The next 9 membrane-spanning stretches (helical) occupy residues 15–35 (WLLCLSVLMLLALLLSLCAGE), 61–81 (LAVLLVGAALAISGAVMQALF), 88–108 (PGLLGVSNGAGVGLIAAVLLG), 112–132 (LPNWALGLCAIAGALIITLIL), 146–166 (LLAGVALGIICSALMTWAIYF), 184–204 (GGVDWRQSWLMLALIPVLLWI), 240–260 (GWMVGVSVALAGAIGFIGLVI), 274–294 (VLLPGCALAGASALLLADIVA), and 302–322 (ELPIGVVTATLGAPVFIWLLL).

This sequence belongs to the binding-protein-dependent transport system permease family. FecCD subfamily. In terms of assembly, the complex is composed of two ATP-binding proteins (BtuD), two transmembrane proteins (BtuC) and a solute-binding protein (BtuF).

It is found in the cell inner membrane. Its function is as follows. Part of the ABC transporter complex BtuCDF involved in vitamin B12 import. Involved in the translocation of the substrate across the membrane. The protein is Vitamin B12 import system permease protein BtuC of Escherichia coli O9:H4 (strain HS).